A 303-amino-acid chain; its full sequence is Serine/threonine-protein phosphatase PP-X homolog 2 (303 aa).

Asp51, His53, Asp79, and Asn111 together coordinate Mn(2+). His112 (proton donor) is an active-site residue. Positions 161 and 235 each coordinate Mn(2+).

It belongs to the PPP phosphatase family. PP-4 (PP-X) subfamily. Mn(2+) is required as a cofactor.

The catalysed reaction is O-phospho-L-seryl-[protein] + H2O = L-seryl-[protein] + phosphate. It carries out the reaction O-phospho-L-threonyl-[protein] + H2O = L-threonyl-[protein] + phosphate. This is Serine/threonine-protein phosphatase PP-X homolog 2 (Ppx2) from Paramecium tetraurelia.